The chain runs to 373 residues: Capsular polysaccharide phosphotransferase (373 aa).

The protein belongs to the stealth family.

Its function is as follows. Part of a capsule gene locus. Expression was not detected under standard growth conditions. This is Capsular polysaccharide phosphotransferase from Neisseria meningitidis serogroup B.